The following is a 215-amino-acid chain: Octanoyltransferase (215 aa).

The 176-residue stretch at 31 to 206 folds into the BPL/LPL catalytic domain; the sequence is TSAEDEIWLV…QLVKHLDYAE (176 aa). Substrate is bound by residues 70-77, 137-139, and 150-152; these read RGGQVTYH, SLG, and GLA. Cysteine 168 (acyl-thioester intermediate) is an active-site residue.

The protein belongs to the LipB family.

The protein resides in the cytoplasm. The catalysed reaction is octanoyl-[ACP] + L-lysyl-[protein] = N(6)-octanoyl-L-lysyl-[protein] + holo-[ACP] + H(+). Its pathway is protein modification; protein lipoylation via endogenous pathway; protein N(6)-(lipoyl)lysine from octanoyl-[acyl-carrier-protein]: step 1/2. Catalyzes the transfer of endogenously produced octanoic acid from octanoyl-acyl-carrier-protein onto the lipoyl domains of lipoate-dependent enzymes. Lipoyl-ACP can also act as a substrate although octanoyl-ACP is likely to be the physiological substrate. This chain is Octanoyltransferase, found in Pseudomonas fluorescens (strain SBW25).